The primary structure comprises 257 residues: tRNA pseudouridine synthase A (257 aa).

The active-site Nucleophile is Asp57. Tyr115 contributes to the substrate binding site.

The protein belongs to the tRNA pseudouridine synthase TruA family. As to quaternary structure, homodimer.

It catalyses the reaction uridine(38/39/40) in tRNA = pseudouridine(38/39/40) in tRNA. Formation of pseudouridine at positions 38, 39 and 40 in the anticodon stem and loop of transfer RNAs. The polypeptide is tRNA pseudouridine synthase A (Lawsonia intracellularis (strain PHE/MN1-00)).